Reading from the N-terminus, the 1107-residue chain is Protein translocase subunit SecA (1107 aa).

Residues Gln-169, 187–191, and Asp-688 each bind ATP; that span reads GEGKT. The segment covering 1036-1066 has biased composition (basic and acidic residues); sequence RHAAEQRTDMSKYRTQKDDIEAQQKAQRDAA. The disordered stretch occupies residues 1036-1107; it reads RHAAEQRTDM…KFKQCHGRNL (72 aa). Cys-1091, Cys-1093, Cys-1102, and His-1103 together coordinate Zn(2+). The span at 1097–1107 shows a compositional bias: basic residues; the sequence is KKFKQCHGRNL.

This sequence belongs to the SecA family. Monomer and homodimer. Part of the essential Sec protein translocation apparatus which comprises SecA, SecYEG and auxiliary proteins SecDF. Other proteins may also be involved. Requires Zn(2+) as cofactor.

The protein resides in the cell inner membrane. It localises to the cytoplasm. It carries out the reaction ATP + H2O + cellular proteinSide 1 = ADP + phosphate + cellular proteinSide 2.. Part of the Sec protein translocase complex. Interacts with the SecYEG preprotein conducting channel. Has a central role in coupling the hydrolysis of ATP to the transfer of proteins into and across the cell membrane, serving as an ATP-driven molecular motor driving the stepwise translocation of polypeptide chains across the membrane. The sequence is that of Protein translocase subunit SecA from Porphyromonas gingivalis (strain ATCC BAA-308 / W83).